The following is a 269-amino-acid chain: Expansin-B9 (269 aa).

An N-terminal signal peptide occupies residues 1–24 (MGSLANNIMVVGAVLAALVVGGSC). Asn-34 is a glycosylation site (N-linked (GlcNAc...) asparagine). Residues 63 to 169 (GGACGIKNVN…RRVRCKYPAG (107 aa)) enclose the Expansin-like EG45 domain. Intrachain disulfides connect Cys-66–Cys-94, Cys-97–Cys-164, and Cys-102–Cys-108. In terms of domain architecture, Expansin-like CBD spans 183 to 264 (NYVAVLVKFV…NWRPDAVYTS (82 aa)).

It belongs to the expansin family. Expansin B subfamily. In terms of tissue distribution, expressed in anthers and pollen.

Its subcellular location is the secreted. The protein localises to the cell wall. It localises to the membrane. May aid fertilization by loosening the cell wall of the stigma and style, thereby facilitating penetration of the pollen tube. Acts selectively on grass cell walls, which are relatively poor in pectins and xyloglucans and rich in glucuronoarabinoxylans and (1-3),(1-4)-beta-D-glucans, when compared with cell walls of other angiosperms, including other monocots. The protein is Expansin-B9 (EXPB9) of Zea mays (Maize).